A 239-amino-acid chain; its full sequence is Orotidine 5'-phosphate decarboxylase (239 aa).

Residues Asp-10, Lys-32, 59–68, Thr-122, Arg-184, Gln-193, Gly-213, and Arg-214 each bind substrate; that span reads DLKLHDIPNT. The active-site Proton donor is the Lys-61.

The protein belongs to the OMP decarboxylase family. Type 1 subfamily. As to quaternary structure, homodimer.

The enzyme catalyses orotidine 5'-phosphate + H(+) = UMP + CO2. The protein operates within pyrimidine metabolism; UMP biosynthesis via de novo pathway; UMP from orotate: step 2/2. Catalyzes the decarboxylation of orotidine 5'-monophosphate (OMP) to uridine 5'-monophosphate (UMP). In Geobacillus sp. (strain WCH70), this protein is Orotidine 5'-phosphate decarboxylase.